The primary structure comprises 482 residues: Histone deacetylase 1 (482 aa).

Residues 9 to 321 (RKVCYYYDGD…WTYETAVALD (313 aa)) are histone deacetylase. 1D-myo-inositol 1,4,5,6-tetrakisphosphate-binding residues include Gly-27 and Lys-31. Lys-74 bears the N6-acetyllysine; alternate mark. A Glycyl lysine isopeptide (Lys-Gly) (interchain with G-Cter in SUMO2); alternate cross-link involves residue Lys-74. Residue His-141 is part of the active site. The Zn(2+) site is built by Asp-176 and His-178. Lys-220 bears the N6-acetyllysine mark. Cys-261 is modified (S-nitrosocysteine). Residue Asp-264 coordinates Zn(2+). 1D-myo-inositol 1,4,5,6-tetrakisphosphate is bound at residue Arg-270. S-nitrosocysteine is present on Cys-273. The span at 390 to 400 (PEESGDEDEDD) shows a compositional bias: acidic residues. Residues 390–482 (PEESGDEDED…KGVKEEVKLA (93 aa)) form a disordered region. A phosphoserine mark is found at Ser-393, Ser-406, and Ser-409. Positions 401–416 (PDKRISICSSDKRIAC) are enriched in basic and acidic residues. Residues 417–427 (EEEFSDSEEEG) are compositionally biased toward acidic residues. Residues Ser-421 and Ser-423 each carry the phosphoserine; by CK2 modification. Lys-432 carries the N6-methylated lysine; by EHMT2 modification. A Glycyl lysine isopeptide (Lys-Gly) (interchain with G-Cter in SUMO2) cross-link involves residue Lys-438. Residues 443–482 (VKTEDEKEKDPEEKKEVTEEEKTKEEKPEAKGVKEEVKLA) are compositionally biased toward basic and acidic residues. Lys-444 is covalently cross-linked (Glycyl lysine isopeptide (Lys-Gly) (interchain with G-Cter in SUMO2); alternate). Lys-444 participates in a covalent cross-link: Glycyl lysine isopeptide (Lys-Gly) (interchain with G-Cter in SUMO); alternate. Glycyl lysine isopeptide (Lys-Gly) (interchain with G-Cter in SUMO2) cross-links involve residues Lys-456, Lys-457, and Lys-473. Lys-476 participates in a covalent cross-link: Glycyl lysine isopeptide (Lys-Gly) (interchain with G-Cter in SUMO2); alternate. A Glycyl lysine isopeptide (Lys-Gly) (interchain with G-Cter in SUMO); alternate cross-link involves residue Lys-476. Lys-480 participates in a covalent cross-link: Glycyl lysine isopeptide (Lys-Gly) (interchain with G-Cter in SUMO2).

This sequence belongs to the histone deacetylase family. HD type 1 subfamily. In terms of assembly, part of the core histone deacetylase (HDAC) complex composed of HDAC1, HDAC2, RBBP4 and RBBP7, the core complex associates with SIN3, SAP18 and SAP30 to form the SIN3 HDAC complex. Component of the nucleosome remodeling and deacetylase (NuRD) repressor complex, composed of core proteins MTA1, MTA2, MTA3, RBBP4, RBBP7, HDAC1, HDAC2, MBD2, MBD3, and peripherally associated proteins CDK2AP1, CDK2AP2, GATAD2A, GATAD2B, CHD3, CHD4 and CHD5. The exact stoichiometry of the NuRD complex is unknown, and some subunits such as MBD2 and MBD3, GATAD2A and GATAD2B, and CHD3, CHD4 and CHD5 define mutually exclusive NuRD complexes. Component of a BHC histone deacetylase complex that contains HDAC1, HDAC2, HMG20B/BRAF35, KDM1A, RCOR1/CoREST and PHF21A/BHC80. The BHC complex may also contain ZMYM2, ZNF217, ZMYM3, GSE1 and GTF2I. Component of a mSin3A corepressor complex that contains SIN3A, SAP130, SUDS3/SAP45, ARID4B/SAP180, HDAC1 and HDAC2. Component of the SIN3B complex, which includes SIN3B, HDAC1, PHF12 and MORF4L1. Found in a trimeric complex with APBB1 and TSHZ3; the interaction between HDAC1 and APBB1 is mediated by TSHZ3. Forms a complex comprising APPL1, RUVBL2, APPL2, CTNNB1 and HDAC2. Component of a RCOR/GFI/KDM1A/HDAC complex. Part of a complex composed of TRIM28, HDAC1, HDAC2 and EHMT2. Part of a complex containing at least CDYL, MIER1, MIER2, HDAC1 and HDAC2. The large PER complex involved in the histone deacetylation is composed of at least HDAC1, PER2, SFPQ and SIN3A. Associates with the 9-1-1 complex; interacts with HUS1. Found in a complex with DNMT3A and HDAC7. Found in a complex with YY1, SIN3A and GON4L. Identified in a histone deacetylase complex that contains DNTTIP1, HDAC1 and MIDEAS; this complex assembles into a tetramer that contains four copies of each protein chain. Found in a complex composed of at least SINHCAF, SIN3A, HDAC1, SAP30, RBBP4, OGT and TET1. Interacts with GFI1; the interaction is direct. Interacts directly with GFI1B. Interacts with TSHZ3 (via N-terminus); the interaction is direct. Interacts with APEX1; the interaction is not dependent on the acetylated status of APEX1. Interacts with BANP. Interacts with BAZ2A/TIP5. Interacts with BCL6. Interacts with BCOR. Interacts with BHLHE40/DEC1. Interacts with BRCC3; this interaction is enhanced in the presence of PWWP2B. Interacts with BRMS1. Interacts with BRMS1L. Interacts with C10orf90/FATS (via its N-terminal); the interaction prevents binding of HDAC1 to CDKN1A/p21 and facilitates the acetylation and stabilization of CDKN1A/p21. Interacts with CBFA2T3. Interacts with CCAR2. Interacts with CDK2AP1. Interacts with CHD3. Interacts with CHD4. Interacts with CHFR. Interacts with CIART. Interacts with CDKN1A/p21. Interacts with CDK5 complexed to CDK5R1 (p25). Interacts with CRY1. Interacts with DAXX. Interacts with DDIT3/CHOP. Interacts with DDX5. Interacts with DHX36; this interaction occurs in a RNA-dependent manner. Interacts with DNMT1. Interacts with DNTTIP1. Interacts with E4F1. Interacts with EP300. Interacts with ERCC6. Interacts with GATAD2A. Interacts with HCFC1. Interacts with HDAC9. Interacts with HUS1. Interacts with INSM1. Interacts with KDM4A. Interacts with KDM5A; this interaction impairs histone deacetylation. Interacts with KDM5B. Interacts with KLF1. Interacts with MBD3L2. Interacts with MIER1. Interacts with NFE4. Interacts with NR4A2/NURR1. Interacts with NR1D2 (via C-terminus). Interacts with NRIP1. Interacts with NSD2. Interacts with PACS2. Interacts with PHB2. Interacts with PPHLN1. Interacts with PRDM6. Interacts with PRDM16. Interacts with PWWP2A in a MTA1-dependent manner. Interacts with PWWP2B. Interacts with RB1. Interacts with RERE. Interacts with SANBR (via the BTB domain). Interacts with SAMSN1. Interacts with SAP30L. Interacts with SETDB1. Interacts with SIN3A. Interacts with SMAD3. Interacts with SMAD4; positively regulated by ZBTB7A. Interacts with SMARCAD1. Interacts with SMARCA4/BRG1. Interacts with SMYD2. Interacts with SMYD4 (via MYND-type zinc finger). Interacts with SP1; the interaction deacetylates SP1 and regulates its transcriptional activity. Interacts with SP3; the interaction deacetylates SP3 and regulates its transcriptional activity. In vitro, C(18) ceramides increase this interaction and the subsequent SP3 deacetylation and SP3-mediated repression of the TERT promoter. Interacts with SPEN/MINT. Interacts with SPHK2. Interacts with SUV39H1. Interacts with TGIF. Interacts with TGIF2. Interacts with TRAF6. Interacts with TRIM28; the interaction recruits HDAC1 to E2F1 and inhibits its acetylation. Interacts with TSC22D3 isoform 1; this interaction affects HDAC1 activity on MYOG promoter and thus inhibits MYOD1 transcriptional activity. Interacts with UHRF1. Interacts with UHRF2. Interacts with ZBTB7A. Interacts with ZMYND8. Interacts with ZMYND15. Interacts with ZNF431. Interacts with ZNF516; this interaction is enhanced in the presence of PWWP2B. Interacts with ZNF541. Interacts with ZNF638. Interacts with ZNHIT1. Interacts with the non-histone region of MACROH2A1. Identified in a complex with HDAC2, KCTD19, DNTTIP1 and ZNF541. Interacts with VRK1. As to quaternary structure, (Microbial infection) Interacts with SV40 large T antigen. It depends on Zn(2+) as a cofactor. Sumoylated on Lys-444 and Lys-476; which promotes enzymatic activity. Desumoylated by SENP1. In terms of processing, phosphorylation on Ser-421 and Ser-423 promotes enzymatic activity and interactions with NuRD and SIN3 complexes. Phosphorylated by CDK5. Post-translationally, ubiquitinated by CHFR, leading to its degradation by the proteasome. Ubiquitinated by KCTD11, leading to proteasomal degradation. As to expression, ubiquitous, with higher levels in heart, pancreas and testis, and lower levels in kidney and brain.

The protein localises to the nucleus. It catalyses the reaction N(6)-acetyl-L-lysyl-[histone] + H2O = L-lysyl-[histone] + acetate. It carries out the reaction N(6)-acetyl-L-lysyl-[protein] + H2O = L-lysyl-[protein] + acetate. The enzyme catalyses N(6)-(2E)-butenoyl-L-lysyl-[protein] + H2O = (2E)-2-butenoate + L-lysyl-[protein]. The catalysed reaction is N(6)-[(S)-lactoyl]-L-lysyl-[protein] + H2O = (S)-lactate + L-lysyl-[protein]. With respect to regulation, inositol tetraphosphate (1D-myo-inositol 1,4,5,6-tetrakisphosphate) may act as an intermolecular glue between HDAC1 and N-Cor repressor complex components. Functionally, histone deacetylase that catalyzes the deacetylation of lysine residues on the N-terminal part of the core histones (H2A, H2B, H3 and H4). Histone deacetylation gives a tag for epigenetic repression and plays an important role in transcriptional regulation, cell cycle progression and developmental events. Histone deacetylases act via the formation of large multiprotein complexes. Acts as a component of the histone deacetylase NuRD complex which participates in the remodeling of chromatin. As part of the SIN3B complex is recruited downstream of the constitutively active genes transcriptional start sites through interaction with histones and mitigates histone acetylation and RNA polymerase II progression within transcribed regions contributing to the regulation of transcription. Also functions as a deacetylase for non-histone targets, such as NR1D2, RELA, SP1, SP3, STAT3 and TSHZ3. Deacetylates SP proteins, SP1 and SP3, and regulates their function. Component of the BRG1-RB1-HDAC1 complex, which negatively regulates the CREST-mediated transcription in resting neurons. Upon calcium stimulation, HDAC1 is released from the complex and CREBBP is recruited, which facilitates transcriptional activation. Deacetylates TSHZ3 and regulates its transcriptional repressor activity. Deacetylates 'Lys-310' in RELA and thereby inhibits the transcriptional activity of NF-kappa-B. Deacetylates NR1D2 and abrogates the effect of KAT5-mediated relieving of NR1D2 transcription repression activity. Component of a RCOR/GFI/KDM1A/HDAC complex that suppresses, via histone deacetylase (HDAC) recruitment, a number of genes implicated in multilineage blood cell development. Involved in CIART-mediated transcriptional repression of the circadian transcriptional activator: CLOCK-BMAL1 heterodimer. Required for the transcriptional repression of circadian target genes, such as PER1, mediated by the large PER complex or CRY1 through histone deacetylation. In addition to protein deacetylase activity, also has protein-lysine deacylase activity: acts as a protein decrotonylase and delactylase by mediating decrotonylation ((2E)-butenoyl) and delactylation (lactoyl) of histones, respectively. This Homo sapiens (Human) protein is Histone deacetylase 1.